Here is a 360-residue protein sequence, read N- to C-terminus: Fe(3+) ions import ATP-binding protein FbpC (360 aa).

The ABC transporter domain maps to 4–236; that stretch reads LEIKGLHKHY…PKDRMIAEFL (233 aa). 36–43 contacts ATP; the sequence is GPSGCGKT.

The protein belongs to the ABC transporter superfamily. Fe(3+) ion importer (TC 3.A.1.10) family. As to quaternary structure, the complex is composed of two ATP-binding proteins (FbpC), two transmembrane proteins (FbpB) and a solute-binding protein (FbpA).

Its subcellular location is the cell inner membrane. It carries out the reaction Fe(3+)(out) + ATP + H2O = Fe(3+)(in) + ADP + phosphate + H(+). In terms of biological role, part of the ABC transporter complex FbpABC involved in Fe(3+) ions import. Responsible for energy coupling to the transport system. The protein is Fe(3+) ions import ATP-binding protein FbpC of Mesorhizobium japonicum (strain LMG 29417 / CECT 9101 / MAFF 303099) (Mesorhizobium loti (strain MAFF 303099)).